The chain runs to 579 residues: Protein O-linked-mannose beta-1,4-N-acetylglucosaminyltransferase 2 (579 aa).

At 1 to 4 (MGVG) the chain is on the cytoplasmic side. Residues 5–25 (TLLNGLLVSVVAALLWKYSKL) form a helical; Signal-anchor for type II membrane protein membrane-spanning segment. The Lumenal segment spans residues 26–579 (SEHAALLEEE…PFADVLMCRT (554 aa)). N-linked (GlcNAc...) asparagine glycans are attached at residues asparagine 98, asparagine 275, and asparagine 542. In terms of domain architecture, Fibronectin type-III spans 480–579 (HPGRVRDARC…PFADVLMCRT (100 aa)).

It belongs to the glycosyltransferase 61 family.

Its subcellular location is the endoplasmic reticulum membrane. The enzyme catalyses 3-O-(alpha-D-mannosyl)-L-threonyl-[protein] + UDP-N-acetyl-alpha-D-glucosamine = 3-O-(N-acetyl-beta-D-glucosaminyl-(1-&gt;4)-alpha-D-mannosyl)-L-threonyl-[protein] + UDP + H(+). It participates in protein modification; protein glycosylation. O-linked mannose beta-1,4-N-acetylglucosaminyltransferase that transfers UDP-N-acetyl-D-glucosamine to the 4-position of the mannose to generate N-acetyl-D-glucosamine-beta-1,4-O-D-mannosylprotein. Involved in the biosynthesis of the phosphorylated O-mannosyl trisaccharide (N-acetylgalactosamine-beta-3-N-acetylglucosamine-beta-4-(phosphate-6-)mannose), a carbohydrate structure present in alpha-dystroglycan (DAG1), which is required for binding laminin G-like domain-containing extracellular proteins with high affinity. This is Protein O-linked-mannose beta-1,4-N-acetylglucosaminyltransferase 2 (pomgnt2) from Tetraodon nigroviridis (Spotted green pufferfish).